The primary structure comprises 902 residues: HTH-type transcriptional regulator MalT (902 aa).

39-46 contacts ATP; that stretch reads SPAGYGKT. In terms of domain architecture, HTH luxR-type spans 832 to 897; sequence ELVRTSPLTQ…EAIVTAENLL (66 aa). The segment at residues 856–875 is a DNA-binding region (H-T-H motif); that stretch reads NEQIAQELDVAGTTIKTHIR.

It belongs to the MalT family. Monomer in solution. Oligomerizes to an active state in the presence of the positive effectors ATP and maltotriose.

With respect to regulation, activated by ATP and maltotriose, which are both required for DNA binding. Functionally, positively regulates the transcription of the maltose regulon whose gene products are responsible for uptake and catabolism of malto-oligosaccharides. Specifically binds to the promoter region of its target genes, recognizing a short DNA motif called the MalT box. The chain is HTH-type transcriptional regulator MalT from Vibrio parahaemolyticus serotype O3:K6 (strain RIMD 2210633).